A 537-amino-acid polypeptide reads, in one-letter code: 2-succinyl-5-enolpyruvyl-6-hydroxy-3-cyclohexene-1-carboxylate synthase (537 aa).

It belongs to the TPP enzyme family. MenD subfamily. Homodimer. Requires Mg(2+) as cofactor. Mn(2+) serves as cofactor. Thiamine diphosphate is required as a cofactor.

The catalysed reaction is isochorismate + 2-oxoglutarate + H(+) = 5-enolpyruvoyl-6-hydroxy-2-succinyl-cyclohex-3-ene-1-carboxylate + CO2. It functions in the pathway quinol/quinone metabolism; 1,4-dihydroxy-2-naphthoate biosynthesis; 1,4-dihydroxy-2-naphthoate from chorismate: step 2/7. The protein operates within quinol/quinone metabolism; menaquinone biosynthesis. Its function is as follows. Catalyzes the thiamine diphosphate-dependent decarboxylation of 2-oxoglutarate and the subsequent addition of the resulting succinic semialdehyde-thiamine pyrophosphate anion to isochorismate to yield 2-succinyl-5-enolpyruvyl-6-hydroxy-3-cyclohexene-1-carboxylate (SEPHCHC). The protein is 2-succinyl-5-enolpyruvyl-6-hydroxy-3-cyclohexene-1-carboxylate synthase of Desulfotalea psychrophila (strain LSv54 / DSM 12343).